Here is an 854-residue protein sequence, read N- to C-terminus: DNA mismatch repair protein MutS (854 aa).

Residue 615 to 622 (GPNMGGKS) participates in ATP binding.

This sequence belongs to the DNA mismatch repair MutS family.

This protein is involved in the repair of mismatches in DNA. It is possible that it carries out the mismatch recognition step. This protein has a weak ATPase activity. This Aliivibrio fischeri (strain ATCC 700601 / ES114) (Vibrio fischeri) protein is DNA mismatch repair protein MutS.